The primary structure comprises 123 residues: Small ribosomal subunit protein uS12 (123 aa).

Asp89 is subject to 3-methylthioaspartic acid.

This sequence belongs to the universal ribosomal protein uS12 family. Part of the 30S ribosomal subunit. Contacts proteins S8 and S17. May interact with IF1 in the 30S initiation complex.

Its function is as follows. With S4 and S5 plays an important role in translational accuracy. Interacts with and stabilizes bases of the 16S rRNA that are involved in tRNA selection in the A site and with the mRNA backbone. Located at the interface of the 30S and 50S subunits, it traverses the body of the 30S subunit contacting proteins on the other side and probably holding the rRNA structure together. The combined cluster of proteins S8, S12 and S17 appears to hold together the shoulder and platform of the 30S subunit. The protein is Small ribosomal subunit protein uS12 of Prochlorococcus marinus (strain MIT 9211).